A 126-amino-acid chain; its full sequence is MARIAGVDIPRNKKIEIAITYIYGIGRSNGMDVLRKANVDPNRRVRDLTEEEVGRIREIIDREYRVEGDLRREVQLNIKRLMDIGCYRGLRHRRGMPVRGQRTRTNARTRRGRRGQAIGIKKKVKK.

The disordered stretch occupies residues 95-126; the sequence is GMPVRGQRTRTNARTRRGRRGQAIGIKKKVKK.

Belongs to the universal ribosomal protein uS13 family. Part of the 30S ribosomal subunit. Forms a loose heterodimer with protein S19. Forms two bridges to the 50S subunit in the 70S ribosome.

Its function is as follows. Located at the top of the head of the 30S subunit, it contacts several helices of the 16S rRNA. In the 70S ribosome it contacts the 23S rRNA (bridge B1a) and protein L5 of the 50S subunit (bridge B1b), connecting the 2 subunits; these bridges are implicated in subunit movement. Contacts the tRNAs in the A and P-sites. The polypeptide is Small ribosomal subunit protein uS13 (Chloroflexus aggregans (strain MD-66 / DSM 9485)).